Reading from the N-terminus, the 147-residue chain is D-aminoacyl-tRNA deacylase (147 aa).

The Gly-cisPro motif, important for rejection of L-amino acids motif lies at 136-137; that stretch reads GP.

Belongs to the DTD family. In terms of assembly, homodimer.

It is found in the cytoplasm. The catalysed reaction is glycyl-tRNA(Ala) + H2O = tRNA(Ala) + glycine + H(+). It catalyses the reaction a D-aminoacyl-tRNA + H2O = a tRNA + a D-alpha-amino acid + H(+). Functionally, an aminoacyl-tRNA editing enzyme that deacylates mischarged D-aminoacyl-tRNAs. Also deacylates mischarged glycyl-tRNA(Ala), protecting cells against glycine mischarging by AlaRS. Acts via tRNA-based rather than protein-based catalysis; rejects L-amino acids rather than detecting D-amino acids in the active site. By recycling D-aminoacyl-tRNA to D-amino acids and free tRNA molecules, this enzyme counteracts the toxicity associated with the formation of D-aminoacyl-tRNA entities in vivo and helps enforce protein L-homochirality. This Streptococcus equi subsp. zooepidemicus (strain H70) protein is D-aminoacyl-tRNA deacylase.